Here is a 206-residue protein sequence, read N- to C-terminus: MLTVALPKGRIAEQTLEIFAEIFGGEFKFEGRELIMEKEGFKFLNVRNQDVPTYVEHGAADIGVVGLDVITEKELDIIQLLDMQLGKCKVAIGIKNEDELDWNRPNIKVATKMVNIAKNYFAQKAVGVEVVKLYGSIELAPLVGLADAIVDIVETGNTMRENGLKVAEDIMDSSAHLIANKNSFYGKKEEILSLYEKIKAVVESRG.

Belongs to the ATP phosphoribosyltransferase family. Short subfamily. As to quaternary structure, heteromultimer composed of HisG and HisZ subunits.

The protein resides in the cytoplasm. The catalysed reaction is 1-(5-phospho-beta-D-ribosyl)-ATP + diphosphate = 5-phospho-alpha-D-ribose 1-diphosphate + ATP. It participates in amino-acid biosynthesis; L-histidine biosynthesis; L-histidine from 5-phospho-alpha-D-ribose 1-diphosphate: step 1/9. Functionally, catalyzes the condensation of ATP and 5-phosphoribose 1-diphosphate to form N'-(5'-phosphoribosyl)-ATP (PR-ATP). Has a crucial role in the pathway because the rate of histidine biosynthesis seems to be controlled primarily by regulation of HisG enzymatic activity. The sequence is that of ATP phosphoribosyltransferase from Sulfurovum sp. (strain NBC37-1).